Reading from the N-terminus, the 580-residue chain is Transcription factor coe2-B (580 aa).

The tract at residues 60–63 (RKSN) is interaction with DNA. A C5-type zinc finger spans residues 148–167 (CRVLLTHEVMCSRCCEKKSC). Interaction with DNA regions lie at residues 194–201 (NCLKTAGN) and 233–236 (NNSK). Residues 259–341 (PCIKAISPSE…CKGAPGRFIY (83 aa)) form the IPT/TIG domain. The disordered stretch occupies residues 455–492 (IRNTSSISPRGYSSSSTPQQSNYSTPSNSMNGYSNVPM). Residues 459 to 481 (SSISPRGYSSSSTPQQSNYSTPS) are compositionally biased toward low complexity. Over residues 482 to 492 (NSMNGYSNVPM) the composition is skewed to polar residues.

The protein belongs to the COE family. In terms of tissue distribution, in embryos, expressed in precursors of primary neurons. In adults, expressed at high levels in the brain, and at low levels in the somatic muscles, testis, and possibly the spleen.

Its subcellular location is the nucleus. Its function is as follows. May play a pivotal role in the transcriptional cascade that specifies primary neurons in embryos. Stabilizes the higher neural potential of selected progenitor cells that express neurog2/X-ngnr-1 by maintaining Delta-Notch signaling. Thus ensures the transition between neural competence and irreversible commitment to a neural fate. Also promotes neuronal differentiation by activating neurod1 expression, directly or indirectly. The sequence is that of Transcription factor coe2-B from Xenopus laevis (African clawed frog).